Consider the following 141-residue polypeptide: Sperm-associated microtubule inner protein 10 (141 aa).

Basic and acidic residues predominate over residues 1-16; the sequence is MASEKDDGPALPKLDD. The disordered stretch occupies residues 1-33; sequence MASEKDDGPALPKLDDDNQTAENTCKPAEEQPQ.

In terms of assembly, microtubule inner protein component of sperm flagellar doublet microtubules. Expressed predominantly in the testis.

The protein resides in the cytoplasm. It localises to the cytoskeleton. The protein localises to the flagellum axoneme. Its function is as follows. Microtubule inner protein (MIP) part of the dynein-decorated doublet microtubules (DMTs) in flagellum axoneme, which is required for flagellum beating. May serve to reinforce and thus stabilize the microtubule structure in the sperm flagella. Involved in the regulation of sperm motility. This chain is Sperm-associated microtubule inner protein 10 (Spmip10), found in Mus musculus (Mouse).